The primary structure comprises 1280 residues: Multidrug resistance protein 1 (1280 aa).

Topologically, residues 1–72 are cytoplasmic; the sequence is MSRAHAAYAN…YADATDRVLM (72 aa). Residues 72–357 enclose the ABC transmembrane type-1 1 domain; the sequence is MIAGTAFAVA…VAPSRTAFTE (286 aa). 6 helical membrane-spanning segments follow: residues 73 to 93, 120 to 140, 189 to 209, 216 to 236, 297 to 317, and 326 to 345; these read IAGTAFAVACGAGMPVFSFIF, YVGIAMLIACAGHVMCWTVAA, KLSQGIMNGSMGVIGYIAGFV, LMMIGMMPFIIVMAAIIGSIV, LSAAVIMALMYVSYTVAFFFG, and RDMADIISTFLAVLMGSFGL. Residues 346 to 712 are Cytoplasmic-facing; that stretch reads GFVAPSRTAF…MRMNKDKAWA (367 aa). The ABC transporter 1 domain maps to 391–634; sequence IEFRNVRFAY…DGEFAAVAKM (244 aa). An ATP-binding site is contributed by 426-433; it reads GASGCGKS. 6 consecutive transmembrane segments (helical) span residues 713–733, 762–781, 837–857, 858–878, 938–958, and 976–996; these read VALGILSSVVIGSARPASSIV, PLFIVFAVANFSGWILHGFY, IGLKVQTMCIIASGLVVGFIY, QWKLALVALACMPLMIGCSLT, IIAGGIYGITQFIFYGVYALC, and VMIASMSILFGAQNAGEAGAF. An ABC transmembrane type-1 2 domain is found at 713–1002; it reads VALGILSSVV…AGAFATKLAD (290 aa). One can recognise an ABC transporter 2 domain in the interval 1036 to 1274; sequence IEYRNVQFIY…GGEYKTRYDL (239 aa). 1071 to 1078 serves as a coordination point for ATP; it reads GQTGCGKS. N-linked (GlcNAc...) asparagine glycosylation is present at N1113.

Belongs to the ABC transporter superfamily. ABCB family. Multidrug resistance exporter (TC 3.A.1.201) subfamily.

The protein resides in the membrane. The enzyme catalyses ATP + H2O + xenobioticSide 1 = ADP + phosphate + xenobioticSide 2.. Energy-dependent efflux pump responsible for decreased drug accumulation in multi-drug-resistant cells. Confers vinblastine resistance. This is Multidrug resistance protein 1 (MDR1) from Leishmania enriettii.